The primary structure comprises 511 residues: Lysine--tRNA ligase (511 aa).

Mg(2+) contacts are provided by E422 and E429.

It belongs to the class-II aminoacyl-tRNA synthetase family. Homodimer. The cofactor is Mg(2+).

It is found in the cytoplasm. The catalysed reaction is tRNA(Lys) + L-lysine + ATP = L-lysyl-tRNA(Lys) + AMP + diphosphate. The protein is Lysine--tRNA ligase of Chlorobaculum tepidum (strain ATCC 49652 / DSM 12025 / NBRC 103806 / TLS) (Chlorobium tepidum).